Consider the following 344-residue polypeptide: tRNA N6-adenosine threonylcarbamoyltransferase (344 aa).

2 residues coordinate Fe cation: His-112 and His-116. Residues 135–139 (LVSGG), Asp-168, Gly-181, and Asn-271 contribute to the substrate site. Residue Asp-299 participates in Fe cation binding.

This sequence belongs to the KAE1 / TsaD family. Fe(2+) is required as a cofactor.

It is found in the cytoplasm. The catalysed reaction is L-threonylcarbamoyladenylate + adenosine(37) in tRNA = N(6)-L-threonylcarbamoyladenosine(37) in tRNA + AMP + H(+). In terms of biological role, required for the formation of a threonylcarbamoyl group on adenosine at position 37 (t(6)A37) in tRNAs that read codons beginning with adenine. Is involved in the transfer of the threonylcarbamoyl moiety of threonylcarbamoyl-AMP (TC-AMP) to the N6 group of A37, together with TsaE and TsaB. TsaD likely plays a direct catalytic role in this reaction. The polypeptide is tRNA N6-adenosine threonylcarbamoyltransferase (Sphingopyxis alaskensis (strain DSM 13593 / LMG 18877 / RB2256) (Sphingomonas alaskensis)).